We begin with the raw amino-acid sequence, 246 residues long: Ribosomal RNA large subunit methyltransferase E (246 aa).

Glycine 81, tryptophan 83, aspartate 104, aspartate 120, and aspartate 144 together coordinate S-adenosyl-L-methionine. Lysine 184 (proton acceptor) is an active-site residue.

The protein belongs to the class I-like SAM-binding methyltransferase superfamily. RNA methyltransferase RlmE family.

It is found in the cytoplasm. It carries out the reaction uridine(2552) in 23S rRNA + S-adenosyl-L-methionine = 2'-O-methyluridine(2552) in 23S rRNA + S-adenosyl-L-homocysteine + H(+). In terms of biological role, specifically methylates the uridine in position 2552 of 23S rRNA at the 2'-O position of the ribose in the fully assembled 50S ribosomal subunit. The polypeptide is Ribosomal RNA large subunit methyltransferase E (Agrobacterium fabrum (strain C58 / ATCC 33970) (Agrobacterium tumefaciens (strain C58))).